A 928-amino-acid chain; its full sequence is RhoGEF domain-containing protein gxcH (928 aa).

The span at 30-48 (SKSFDNNNNNNSNTNNIKN) shows a compositional bias: low complexity. Disordered stretches follow at residues 30-76 (SKSF…PPVP), 90-201 (ITNY…PPLG), and 318-410 (DNGV…NKDT). Residues 93–103 (YIPTTPPSINI) are compositionally biased toward polar residues. A compositionally biased stretch (acidic residues) spans 112–123 (DNYDDNYDDNYS). 3 stretches are compositionally biased toward polar residues: residues 129-141 (TSTT…SPEF), 175-187 (ETFN…EGLQ), and 334-367 (KSGT…NLRG). A compositionally biased stretch (low complexity) spans 377–407 (NQTTNKNNSNNNNNNTTTNNNNNNNNNNNNN). The 188-residue stretch at 484–671 (IFNKVVKEII…GKIVSDINGK (188 aa)) folds into the DH domain. A PH-like region spans residues 699-807 (FIGEGKVKKV…NKIEDQIVSE (109 aa)). The tract at residues 835 to 928 (SDSQSDFVDH…NTEPENFSFY (94 aa)) is disordered. Residues 848 to 857 (QEQQEQQQQQ) show a composition bias toward low complexity.

In terms of biological role, GTPase-activating protein. The sequence is that of RhoGEF domain-containing protein gxcH (gxcH) from Dictyostelium discoideum (Social amoeba).